A 376-amino-acid chain; its full sequence is Lipid-A-disaccharide synthase (376 aa).

This sequence belongs to the LpxB family.

The catalysed reaction is a lipid X + a UDP-2-N,3-O-bis[(3R)-3-hydroxyacyl]-alpha-D-glucosamine = a lipid A disaccharide + UDP + H(+). It functions in the pathway bacterial outer membrane biogenesis; LPS lipid A biosynthesis. In terms of biological role, condensation of UDP-2,3-diacylglucosamine and 2,3-diacylglucosamine-1-phosphate to form lipid A disaccharide, a precursor of lipid A, a phosphorylated glycolipid that anchors the lipopolysaccharide to the outer membrane of the cell. The chain is Lipid-A-disaccharide synthase from Coxiella burnetii (strain CbuG_Q212) (Coxiella burnetii (strain Q212)).